A 378-amino-acid polypeptide reads, in one-letter code: L-lactate dehydrogenase (378 aa).

One can recognise an FMN hydroxy acid dehydrogenase domain in the interval 1-378; sequence MIISASTDYR…ELSRDSLVKR (378 aa). Residue Tyr24 coordinates substrate. Residues Ser106 and Gln127 each contribute to the FMN site. Tyr129 provides a ligand contact to substrate. FMN is bound at residue Thr155. Arg164 contributes to the substrate binding site. An FMN-binding site is contributed by Lys251. Residue His275 is the Proton acceptor of the active site. A substrate-binding site is contributed by Arg278. 306–330 lines the FMN pocket; that stretch reads DSGIRTGLDVVRMLALGADCTMLGR.

It belongs to the FMN-dependent alpha-hydroxy acid dehydrogenase family. FMN serves as cofactor.

It is found in the cell inner membrane. The enzyme catalyses (S)-lactate + A = pyruvate + AH2. In terms of biological role, catalyzes the conversion of L-lactate to pyruvate. Is coupled to the respiratory chain. This chain is L-lactate dehydrogenase, found in Vibrio cholerae serotype O1 (strain ATCC 39315 / El Tor Inaba N16961).